The sequence spans 338 residues: MEMO1 family protein MHO1 (338 aa).

It belongs to the MEMO1 family.

The protein localises to the cytoplasm. Its subcellular location is the nucleus. Functionally, plays a role in haploid invasive growth under conditions of nutrient insufficiency, suggesting that the function of the MEMO1 family in cell motility/invasion is conserved across species. In Saccharomyces cerevisiae (strain ATCC 204508 / S288c) (Baker's yeast), this protein is MEMO1 family protein MHO1.